Here is a 117-residue protein sequence, read N- to C-terminus: Large ribosomal subunit protein bL20 (117 aa).

Belongs to the bacterial ribosomal protein bL20 family.

In terms of biological role, binds directly to 23S ribosomal RNA and is necessary for the in vitro assembly process of the 50S ribosomal subunit. It is not involved in the protein synthesizing functions of that subunit. The chain is Large ribosomal subunit protein bL20 from Idiomarina loihiensis (strain ATCC BAA-735 / DSM 15497 / L2-TR).